A 226-amino-acid polypeptide reads, in one-letter code: 2-C-methyl-D-erythritol 4-phosphate cytidylyltransferase (226 aa).

This sequence belongs to the IspD/TarI cytidylyltransferase family. IspD subfamily.

It catalyses the reaction 2-C-methyl-D-erythritol 4-phosphate + CTP + H(+) = 4-CDP-2-C-methyl-D-erythritol + diphosphate. It functions in the pathway isoprenoid biosynthesis; isopentenyl diphosphate biosynthesis via DXP pathway; isopentenyl diphosphate from 1-deoxy-D-xylulose 5-phosphate: step 2/6. Functionally, catalyzes the formation of 4-diphosphocytidyl-2-C-methyl-D-erythritol from CTP and 2-C-methyl-D-erythritol 4-phosphate (MEP). This Bacillus cytotoxicus (strain DSM 22905 / CIP 110041 / 391-98 / NVH 391-98) protein is 2-C-methyl-D-erythritol 4-phosphate cytidylyltransferase.